The following is a 373-amino-acid chain: L-threonine 3-dehydrogenase, mitochondrial (373 aa).

NAD(+) is bound by residues 62–67 (GGLGQL), 88–90 (DIR), 106–107 (NI), Tyr195, Lys199, and Ile225. The active-site Proton donor/acceptor is the Tyr195.

It belongs to the NAD(P)-dependent epimerase/dehydratase family. As to quaternary structure, homodimer.

The protein localises to the mitochondrion. The catalysed reaction is L-threonine + NAD(+) = (2S)-2-amino-3-oxobutanoate + NADH + H(+). The protein operates within amino-acid degradation; L-threonine degradation via oxydo-reductase pathway; glycine from L-threonine: step 1/2. Its function is as follows. Catalyzes the NAD(+)-dependent oxidation of L-threonine to 2-amino-3-ketobutyrate, mediating L-threonine catabolism. The protein is L-threonine 3-dehydrogenase, mitochondrial of Mus musculus (Mouse).